We begin with the raw amino-acid sequence, 187 residues long: Adenylate kinase (187 aa).

Residue 10–15 (GSGKGT) participates in ATP binding. Residues 30-59 (STGDLLRAEVAAGSPLGLKAKEVMARGDLV) form an NMP region. AMP contacts are provided by residues threonine 31, arginine 36, 57–59 (DLV), 85–88 (GYPR), and glutamine 92. The segment at 126-136 (GRAKAEGREDD) is LID. Arginine 127 is an ATP binding site. Residues arginine 133 and arginine 144 each contribute to the AMP site. Glycine 172 is an ATP binding site.

Belongs to the adenylate kinase family. As to quaternary structure, monomer.

It is found in the cytoplasm. It catalyses the reaction AMP + ATP = 2 ADP. The protein operates within purine metabolism; AMP biosynthesis via salvage pathway; AMP from ADP: step 1/1. Catalyzes the reversible transfer of the terminal phosphate group between ATP and AMP. Plays an important role in cellular energy homeostasis and in adenine nucleotide metabolism. This Xanthomonas campestris pv. campestris (strain 8004) protein is Adenylate kinase.